Here is a 290-residue protein sequence, read N- to C-terminus: 4-hydroxy-tetrahydrodipicolinate synthase (290 aa).

A pyruvate-binding site is contributed by T44. Residue Y132 is the Proton donor/acceptor of the active site. K160 serves as the catalytic Schiff-base intermediate with substrate. I202 contacts pyruvate.

This sequence belongs to the DapA family. As to quaternary structure, homotetramer; dimer of dimers.

Its subcellular location is the cytoplasm. The catalysed reaction is L-aspartate 4-semialdehyde + pyruvate = (2S,4S)-4-hydroxy-2,3,4,5-tetrahydrodipicolinate + H2O + H(+). It participates in amino-acid biosynthesis; L-lysine biosynthesis via DAP pathway; (S)-tetrahydrodipicolinate from L-aspartate: step 3/4. Functionally, catalyzes the condensation of (S)-aspartate-beta-semialdehyde [(S)-ASA] and pyruvate to 4-hydroxy-tetrahydrodipicolinate (HTPA). The protein is 4-hydroxy-tetrahydrodipicolinate synthase of Cereibacter sphaeroides (strain ATCC 17025 / ATH 2.4.3) (Rhodobacter sphaeroides).